The primary structure comprises 138 residues: Protein transport protein got1 homolog (138 aa).

Residues 1–7 (MFTDQQK) lie on the Cytoplasmic side of the membrane. The helical transmembrane segment at 8–28 (IGAMLSAMGLFFGFLGVLLFL) threads the bilayer. At 29 to 30 (DR) the chain is on the lumenal side. The helical transmembrane segment at 31-51 (NLLALGNLLLVSGIVLILGLQ) threads the bilayer. The Cytoplasmic portion of the chain corresponds to 52–62 (KTTKFFAQKKK). A helical transmembrane segment spans residues 63–82 (IKGTILFFFGIVVLLVTRWT). The Lumenal portion of the chain corresponds to 83 to 87 (FVGMV). A helical transmembrane segment spans residues 88–108 (IEIFGFVNLFGDAFPIVISIL). The Cytoplasmic portion of the chain corresponds to 109 to 138 (RKLPIIGNILNHPLVNRLLQKADSGNELPF).

It belongs to the GOT1 family.

It is found in the golgi apparatus membrane. Its function is as follows. May be involved in fusion of ER-derived transport vesicles with the Golgi complex. This chain is Protein transport protein got1 homolog (golt1), found in Dictyostelium discoideum (Social amoeba).